Reading from the N-terminus, the 101-residue chain is Ascorbate-specific PTS system EIIB component (101 aa).

Residues 3–96 (VRILAVCGNG…KLLEVIKAHF (94 aa)) enclose the PTS EIIB type-2 domain. Residue cysteine 9 is the Phosphocysteine intermediate of the active site. Cysteine 9 carries the phosphocysteine modification.

It localises to the cytoplasm. It catalyses the reaction N(pros)-phospho-L-histidyl-[protein] + L-ascorbate(out) = L-ascorbate 6-phosphate(in) + L-histidyl-[protein]. The phosphoenolpyruvate-dependent sugar phosphotransferase system (sugar PTS), a major carbohydrate active transport system, catalyzes the phosphorylation of incoming sugar substrates concomitantly with their translocation across the cell membrane. The enzyme II UlaABC PTS system is involved in ascorbate transport. The polypeptide is Ascorbate-specific PTS system EIIB component (ulaB) (Escherichia coli O6:H1 (strain CFT073 / ATCC 700928 / UPEC)).